The chain runs to 124 residues: Fluoride-specific ion channel FluC (124 aa).

Helical transmembrane passes span 4–24, 35–55, 60–80, and 102–122; these read LLLVALGGSIGAVFRYLISIF, FGTLLVNVLGSFLMGVIYALG, ISPEFKALIGIGLLGALTTFS, and VVLNLSLCLFMVYLGQQLVFS. Na(+) is bound by residues Gly-74 and Thr-77.

The protein belongs to the fluoride channel Fluc/FEX (TC 1.A.43) family.

The protein resides in the cell inner membrane. It carries out the reaction fluoride(in) = fluoride(out). Its activity is regulated as follows. Na(+) is not transported, but it plays an essential structural role and its presence is essential for fluoride channel function. Its function is as follows. Fluoride-specific ion channel. Important for reducing fluoride concentration in the cell, thus reducing its toxicity. This Shewanella baltica (strain OS223) protein is Fluoride-specific ion channel FluC.